A 357-amino-acid polypeptide reads, in one-letter code: MSTRRELLESPYLAAVSGRKPCRVPVWFMRQAGRSLPEYRALRERYSMLAACFEPEVACEITLQPLRRYDVDAAILFSDIVVPLCAAGIDLDIVPDVGPVIGDPVRTATDIHAMKPLEPQAIQPIFQAISLLVAALGDVPLIGFAGAPFTLASYLVEGGPSRNHPRTKAMMLAEPASWHTLMDKLTDLTLGFLLGQIDAGVDAIQVFDSWAGTLSLSDYRQYVLPHSARIFATVAEHGVPMTHFGVGTADLLGAMSAAVRSGEKPGHQAVVGVDWRTSLTDAAARVEPCTALQGNLDPVVLLAGWPAVERVARTVVDDGRRAVVAGAAGHVFNLGHGVLPETDPGVLSELVSFIHSL.

Substrate is bound by residues 30–34 (RQAGR), aspartate 79, tyrosine 154, serine 209, and histidine 336.

Belongs to the uroporphyrinogen decarboxylase family. In terms of assembly, homodimer.

The protein localises to the cytoplasm. The catalysed reaction is uroporphyrinogen III + 4 H(+) = coproporphyrinogen III + 4 CO2. It participates in porphyrin-containing compound metabolism; protoporphyrin-IX biosynthesis; coproporphyrinogen-III from 5-aminolevulinate: step 4/4. In terms of biological role, catalyzes the decarboxylation of four acetate groups of uroporphyrinogen-III to yield coproporphyrinogen-III. This Mycobacterium leprae (strain Br4923) protein is Uroporphyrinogen decarboxylase.